The primary structure comprises 435 residues: Metacaspase-1A (435 aa).

Disordered stretches follow at residues 1 to 46 and 106 to 129; these read MQNH…APPP and YQNP…VAFG. Residues 36–46 show a composition bias toward pro residues; the sequence is SPQPGYGAPPP. Active-site residues include His-231 and Cys-287.

It belongs to the peptidase C14B family.

In terms of biological role, involved in cell death (apoptosis). The polypeptide is Metacaspase-1A (casA) (Neosartorya fischeri (strain ATCC 1020 / DSM 3700 / CBS 544.65 / FGSC A1164 / JCM 1740 / NRRL 181 / WB 181) (Aspergillus fischerianus)).